A 323-amino-acid chain; its full sequence is Glyoxylate/hydroxypyruvate reductase B (323 aa).

Residues arginine 237 and glutamate 266 contribute to the active site. Histidine 285 functions as the Proton donor in the catalytic mechanism.

The protein belongs to the D-isomer specific 2-hydroxyacid dehydrogenase family. GhrB subfamily. In terms of assembly, homodimer.

Its subcellular location is the cytoplasm. It catalyses the reaction glycolate + NADP(+) = glyoxylate + NADPH + H(+). The catalysed reaction is (R)-glycerate + NAD(+) = 3-hydroxypyruvate + NADH + H(+). It carries out the reaction (R)-glycerate + NADP(+) = 3-hydroxypyruvate + NADPH + H(+). Catalyzes the NADPH-dependent reduction of glyoxylate and hydroxypyruvate into glycolate and glycerate, respectively. The chain is Glyoxylate/hydroxypyruvate reductase B from Klebsiella pneumoniae (strain 342).